A 150-amino-acid chain; its full sequence is Large ribosomal subunit protein bL9 (150 aa).

Belongs to the bacterial ribosomal protein bL9 family.

In terms of biological role, binds to the 23S rRNA. This Vesicomyosocius okutanii subsp. Calyptogena okutanii (strain HA) protein is Large ribosomal subunit protein bL9.